The primary structure comprises 428 residues: Aerobic C4-dicarboxylate transport protein (428 aa).

Transmembrane regions (helical) follow at residues 5–27 (LFKS…GHYY), 47–64 (MIIA…IAGM), 77–99 (ALLY…VNVV), 141–163 (VIGA…FGFA), 184–206 (VIFG…AMAF), 216–238 (LVQL…VVVL), 289–311 (VVGL…YLTM), 326–348 (IFHQ…GVTG), and 353–375 (VLAA…ILGI).

Belongs to the dicarboxylate/amino acid:cation symporter (DAACS) (TC 2.A.23) family.

The protein localises to the cell inner membrane. Responsible for the transport of dicarboxylates such as succinate, fumarate, and malate from the periplasm across the membrane. This Salmonella typhi protein is Aerobic C4-dicarboxylate transport protein.